The sequence spans 238 residues: Ribonuclease PH (238 aa).

Phosphate-binding positions include R86 and 124-126 (GTR).

Belongs to the RNase PH family. As to quaternary structure, homohexameric ring arranged as a trimer of dimers.

The enzyme catalyses tRNA(n+1) + phosphate = tRNA(n) + a ribonucleoside 5'-diphosphate. In terms of biological role, phosphorolytic 3'-5' exoribonuclease that plays an important role in tRNA 3'-end maturation. Removes nucleotide residues following the 3'-CCA terminus of tRNAs; can also add nucleotides to the ends of RNA molecules by using nucleoside diphosphates as substrates, but this may not be physiologically important. Probably plays a role in initiation of 16S rRNA degradation (leading to ribosome degradation) during starvation. In Erwinia tasmaniensis (strain DSM 17950 / CFBP 7177 / CIP 109463 / NCPPB 4357 / Et1/99), this protein is Ribonuclease PH.